The sequence spans 210 residues: Synaptosomal-associated protein 23 (210 aa).

M1 carries the N-acetylmethionine modification. Phosphoserine is present on residues S5, S20, S23, and S34. A t-SNARE coiled-coil homology 1 domain is found at 14–76; sequence HQVTDESLES…REAEKTLTEL (63 aa). Positions 23-76 form a coiled coil; the sequence is STRRILGLAIESQDAGIKTITMLDEQGEQLNRIEEGMDQINKDMREAEKTLTEL. 5 S-palmitoyl cysteine lipidation sites follow: C79, C80, C83, C85, and C87. The segment at 104–135 is disordered; sequence GDGGDNSPSNVVSKQPSRITNGQPQQTTGAAS. Polar residues predominate over residues 109-133; it reads NSPSNVVSKQPSRITNGQPQQTTGA. A phosphoserine mark is found at S110 and S160. The t-SNARE coiled-coil homology 2 domain occupies 145–207; it reads DAREDEMEEN…DIANTRAKKL (63 aa).

Belongs to the SNAP-25 family. As to quaternary structure, homotetramer (via coiled-coil domain), also forms heterotetramers with STX4 and VAMP3. Found in a complex with VAMP8 and STX1A. Found in a complex with VAMP8 and STX4 in pancreas. Interacts simultaneously with SNAPIN and SYN4. Interacts with STX1A. Interacts with STX12. Interacts tightly to multiple syntaxins and synaptobrevins/VAMPs. Interacts with ZDHHC13 (via ANK repeats). Interacts with ZDHHC17 (via ANK repeats). (Microbial infection) Targeted and hydrolyzed by C.botulinum neurotoxin type A (BoNT/A, botA) which hydrolyzes the 202-Thr-|-Arg-203 bond; the in vitro reaction is not highly efficient. Post-translationally, (Microbial infection) Targeted and hydrolyzed by C.botulinum neurotoxin type E (BoNT/E) which hydrolyzes the 185-Arg-|-Ile-186 bond; the in vitro reaction is more efficient than that of BoNT/A. Expressed in non-neuronal tissues.

Its subcellular location is the cell membrane. It localises to the synapse. The protein localises to the synaptosome. Functionally, essential component of the high affinity receptor for the general membrane fusion machinery and an important regulator of transport vesicle docking and fusion. This chain is Synaptosomal-associated protein 23 (Snap23), found in Mus musculus (Mouse).